We begin with the raw amino-acid sequence, 274 residues long: 2,3,4,5-tetrahydropyridine-2,6-dicarboxylate N-succinyltransferase (274 aa).

2 residues coordinate substrate: R104 and D141.

It belongs to the transferase hexapeptide repeat family. As to quaternary structure, homotrimer.

It is found in the cytoplasm. The catalysed reaction is (S)-2,3,4,5-tetrahydrodipicolinate + succinyl-CoA + H2O = (S)-2-succinylamino-6-oxoheptanedioate + CoA. The protein operates within amino-acid biosynthesis; L-lysine biosynthesis via DAP pathway; LL-2,6-diaminopimelate from (S)-tetrahydrodipicolinate (succinylase route): step 1/3. The sequence is that of 2,3,4,5-tetrahydropyridine-2,6-dicarboxylate N-succinyltransferase from Escherichia coli O139:H28 (strain E24377A / ETEC).